A 209-amino-acid polypeptide reads, in one-letter code: Redox-sensing transcriptional repressor Rex (209 aa).

A DNA-binding region (H-T-H motif) is located at residues 16–55 (LYYRFIQNLSLSGKQRVSSAELSEAVKVDSATIRRDFSYF). 90-95 (GVGNLG) is an NAD(+) binding site.

It belongs to the transcriptional regulatory Rex family. In terms of assembly, homodimer.

Its subcellular location is the cytoplasm. In terms of biological role, modulates transcription in response to changes in cellular NADH/NAD(+) redox state. In Bacillus thuringiensis (strain Al Hakam), this protein is Redox-sensing transcriptional repressor Rex.